The sequence spans 326 residues: G-protein coupled receptor 171 (326 aa).

Topologically, residues 1–19 (MTNSSMFCPIYRDLEPFTY) are extracellular. The helical transmembrane segment at 20–40 (FFYLVYLIGIIGSCFATWAFI) threads the bilayer. Over 41–48 (QKSTNHRC) the chain is Cytoplasmic. A helical membrane pass occupies residues 49-69 (VSIYLINLLTADFLLTLALPV). Over 70–89 (KIVVDLGVAPWKLRIFHCQV) the chain is Extracellular. Cysteines 87 and 165 form a disulfide. Residues 90–110 (TACLIYINMYLSIIFLAFVSI) traverse the membrane as a helical segment. The Cytoplasmic segment spans residues 111-133 (DRCLQLVHSCKIYRIQEPGFAKM). The helical transmembrane segment at 134–154 (ISAVVWLMVLLIMVPNMVIPI) threads the bilayer. Over 155 to 182 (KNIKEKSNVGCMEFKREFGKNWHLLTNF) the chain is Extracellular. A helical membrane pass occupies residues 183-203 (ICVAIFLNFSAIILISNFLVI). The Cytoplasmic portion of the chain corresponds to 204 to 221 (RQLYRNRDNANYPSVKSA). Residues 222–242 (LLNILLVTASYIICFVPYHAV) traverse the membrane as a helical segment. Residues 243 to 268 (RIPYTLSQTEVISDCSTRIALFKAKE) lie on the Extracellular side of the membrane. A helical transmembrane segment spans residues 269-289 (ATLLLAVSNLCFDPILYYHLS). Residues 290-326 (KAFRLKVTETFASPQKMKAREEKPRRENDVQSTGSAC) lie on the Cytoplasmic side of the membrane. The segment at 305–326 (KMKAREEKPRRENDVQSTGSAC) is disordered. Residues 307–318 (KAREEKPRREND) show a composition bias toward basic and acidic residues.

This sequence belongs to the G-protein coupled receptor 1 family.

It is found in the cell membrane. Its function is as follows. G-protein coupled receptor for Big LEN, a 16-amino acid neuropeptide produced from the precursor protein, proSAAS (encoded by PCSK1N). Acts through a G(i)-alpha-mediated pathway in response to Big LEN. Big LEN-GPR171 system plays an important role in regulating feeding and metabolism. Also plays a role in modulating fear and anxiety-like behaviors in the basolateral amygdala. Big LEN-GPR171 modulates the mu-type opioid receptor signaling and antinociception. Acts as a negative regulator T cell function. This Rattus norvegicus (Rat) protein is G-protein coupled receptor 171.